The chain runs to 169 residues: Probable chorismate pyruvate-lyase (169 aa).

Substrate is bound by residues arginine 71, isoleucine 110, and glutamate 150.

It belongs to the UbiC family.

It localises to the cytoplasm. It carries out the reaction chorismate = 4-hydroxybenzoate + pyruvate. The protein operates within cofactor biosynthesis; ubiquinone biosynthesis. Its function is as follows. Removes the pyruvyl group from chorismate, with concomitant aromatization of the ring, to provide 4-hydroxybenzoate (4HB) for the ubiquinone pathway. The sequence is that of Probable chorismate pyruvate-lyase from Acinetobacter baumannii (strain ATCC 17978 / DSM 105126 / CIP 53.77 / LMG 1025 / NCDC KC755 / 5377).